Reading from the N-terminus, the 135-residue chain is Large ribosomal subunit protein uL18c (135 aa).

The protein belongs to the universal ribosomal protein uL18 family. As to quaternary structure, part of the 50S ribosomal subunit; contacts the 5S rRNA.

The protein resides in the plastid. Its subcellular location is the chloroplast. Binds 5S rRNA, forms part of the central protuberance of the 50S subunit. In Phaeodactylum tricornutum (strain CCAP 1055/1), this protein is Large ribosomal subunit protein uL18c (rpl18).